Here is a 278-residue protein sequence, read N- to C-terminus: Undecaprenyl-diphosphatase (278 aa).

8 helical membrane-spanning segments follow: residues 3–23 (YILI…IPIS), 42–62 (VAYS…IIYF), 88–108 (FLVI…LFVI), 112–132 (ILGL…IIIY), 152–172 (IIIV…RSGI), 190–210 (LSFI…VLFS), 225–245 (GLLI…NALL), and 253–273 (VVVL…LSGI).

Belongs to the UppP family.

It is found in the cell membrane. The enzyme catalyses di-trans,octa-cis-undecaprenyl diphosphate + H2O = di-trans,octa-cis-undecaprenyl phosphate + phosphate + H(+). Functionally, catalyzes the dephosphorylation of undecaprenyl diphosphate (UPP). This chain is Undecaprenyl-diphosphatase, found in Saccharolobus islandicus (strain M.16.4 / Kamchatka #3) (Sulfolobus islandicus).